The chain runs to 205 residues: Melanocortin-2 receptor accessory protein 2 (205 aa).

Residue N9 is glycosylated (N-linked (GlcNAc...) asparagine). A helical membrane pass occupies residues 45–65; the sequence is IVIGFWVGLAVFVIFMFFVLT. The residue at position 89 (S89) is a Phosphoserine.

The protein belongs to the MRAP family. As to quaternary structure, homodimer and heterodimer. Forms antiparallel homodimers and heterodimers with MRAP. Interacts with MC1R, MC2R, MC3R, MC4R and MC5R. As to expression, expressed in the adrenal gland and brain. Not expressed in other tissues.

It is found in the cell membrane. The protein resides in the endoplasmic reticulum membrane. Functionally, modulator of melanocortin receptor 4 (MC4R), a receptor involved in energy homeostasis. Plays a central role in the control of energy homeostasis and body weight regulation by increasing ligand-sensitivity of MC4R and MC4R-mediated generation of cAMP. May also act as a negative regulator of MC2R: competes with MRAP for binding to MC2R and impairs the binding of corticotropin (ACTH) to MC2R. May also regulate activity of other melanocortin receptors (MC1R, MC3R and MC5R); however, additional evidence is required in vivo. This Homo sapiens (Human) protein is Melanocortin-2 receptor accessory protein 2 (MRAP2).